A 1160-amino-acid polypeptide reads, in one-letter code: Major DNA-binding protein (1160 aa).

The Required for filament formation signature appears at Phe-808–Trp-809. Positions Ala-1139–Leu-1160 are required for nuclear localization.

This sequence belongs to the herpesviridae major DNA-binding protein family. In terms of assembly, homooligomers. Forms double-helical filaments necessary for the formation of replication compartments within the host nucleus. Interacts with the origin-binding protein. Interacts with the helicase primase complex; this interaction stimulates primer synthesis activity of the helicase-primase complex. Interacts with the DNA polymerase. Interacts with the alkaline exonuclease; this interaction increases its nuclease processivity.

It is found in the host nucleus. Functionally, single-stranded DNA-binding protein required for DNA replication. In terms of biological role, plays several crucial roles in viral infection. Participates in the opening of the viral DNA origin to initiate replication by interacting with the origin-binding protein. May disrupt loops, hairpins and other secondary structures present on ssDNA to reduce and eliminate pausing of viral DNA polymerase at specific sites during elongation. Promotes viral DNA recombination by performing strand-transfer, characterized by the ability to transfer a DNA strand from a linear duplex to a complementary single-stranded DNA circle. Can also catalyze the renaturation of complementary single strands. Additionally, reorganizes the host cell nucleus, leading to the formation of prereplicative sites and replication compartments. This process is driven by the protein which can form double-helical filaments in the absence of DNA. In Simian cytomegalovirus (strain Colburn), this protein is Major DNA-binding protein.